The primary structure comprises 1239 residues: MGDPKEAGAEASPSGAAARGGLSLLSQADSEEPSAQGSALFLGGNEVKSRAVVKYSSAPPRTAFARLEEKTDLKLPPANWLRESAKLGPAGTTILGNSKKSKPFSSFGMAYDFIDSVGNDVDVVSDSENIKKLLKIPYSKSHVSMAVHRIGRTLLLDELDIQELFMRSSQTGDWTWLKEFYQRLIDQKWQRKKKSKEHWYQKAILSKFLYYSINGDGAAQPVPSPAEQEESSSSQQTHESEGAAWPAPFEMPSSVSEDPSASSQGREPLEPSCIVGHVASAPKEQNLTTLFNDGENSQGLKNDFVRNILWTFEDIHMLVGSNMPIFGGGRYPAVSLRLRDNNKPINVLTGIDYWLDNLICNVPELVMCFHVNGIVQKYEMIKTEEIPNLENSNFSTKVIKDIAQNILSFLKSNCTKEGHTYWLFKASGSDIVKLYDLTTLCEETEDKYQNPFTMPVAILLYKVACNMMMKKNQNKKHYGTIRTLLLNCVKLLDKSRHPQIIASANYMLSELFQLDEPKKEESSDSPLNENSDESYSEEEEEMADSDENGSYSTSSDPADDNKAVAIIKSVGELSVPEKYKSIHQIRPSCAFPVCHDTEERCRLVLSYVLEGLKSVDSSIKKESDLPAADPSTPIPLKYEDESTRGGPEGLEKQMALFLDKMGSIQKGSCSGQSGMTPGSWQHKMKLQLILKSSKAYYILSDAAMSLQKYGRALRYIKLALQSHDTYCCLCTNMLSEVLLFLSQYLTLCGDIQLMLAQNANNRAAHLEEFNYQTKEDQEILHSLHRESSCQGFAWATDLSTDLESQLSVSCKCYEAANEILQFSDLKSQNPEHYVQVLKRMGNIRNEIGVFYMNQAAALQGERVVSKSVSAAEQQLWKKSFSCFEKGIHNFESIDDATNAALLLCNTGRLMRVCAQAHCGAEDEFKREFSPEEGLYYSKAVDYYLKALRSLGTRDMHPIVWDSVNWELSTTYFTMATLQQDYAPLSRKAQEQIEKEVSEAMMKSLKHCDVDSATARQPLCQYRAATIHHRLASMYHSCLRNQVGDEHLRKQHRVLADLHYSKAAKLFQLLKDAPCELLRVQLERVAFAEFQMSSQNSNVGKLKTLSGALDIMVRTEHAFQLIRKELVEECDQPKNDEATPAADSSPNLNREEVIKLLSIFESRLSFLLLQSIKLMSSSKRKMSSNAEEDIVLQTNKQIYSQLLRATANRNSTLLERIEVVICLLEQLASGSSRSSGSAVP.

4 disordered regions span residues 1 to 39, 219 to 269, 517 to 559, and 620 to 646; these read MGDP…QGSA, AQPV…REPL, PKKE…DPAD, and KKES…TRGG. Composition is skewed to low complexity over residues 9–28 and 253–263; these read AEAS…LSQA and SSVSEDPSASS. Residues 530–547 show a composition bias toward acidic residues; sequence NSDESYSEEEEEMADSDE. TPR repeat units follow at residues 693–726 and 914–953; these read SKAY…HDTY and AQAH…LGTR.

It localises to the nucleus. Transcription factor involved in erythroid differentiation. Involved in transcriptional activation of the globin gene. This chain is Erythroid differentiation-related factor 1 (Edrf1), found in Mus musculus (Mouse).